Here is a 612-residue protein sequence, read N- to C-terminus: UvrABC system protein C (612 aa).

A GIY-YIG domain is found at 21–99 (HQPGVYRMYD…IKKYRPRYNV (79 aa)). Positions 208 to 243 (QQVIDELMNKMEQASTDLDFERAARFRDQIAALRKT) constitute a UVR domain.

This sequence belongs to the UvrC family. As to quaternary structure, interacts with UvrB in an incision complex.

The protein resides in the cytoplasm. In terms of biological role, the UvrABC repair system catalyzes the recognition and processing of DNA lesions. UvrC both incises the 5' and 3' sides of the lesion. The N-terminal half is responsible for the 3' incision and the C-terminal half is responsible for the 5' incision. The chain is UvrABC system protein C from Idiomarina loihiensis (strain ATCC BAA-735 / DSM 15497 / L2-TR).